Reading from the N-terminus, the 513-residue chain is ATP synthase subunit alpha (513 aa).

169–176 (GDRQTGKT) lines the ATP pocket.

The protein belongs to the ATPase alpha/beta chains family. As to quaternary structure, F-type ATPases have 2 components, CF(1) - the catalytic core - and CF(0) - the membrane proton channel. CF(1) has five subunits: alpha(3), beta(3), gamma(1), delta(1), epsilon(1). CF(0) has three main subunits: a(1), b(2) and c(9-12). The alpha and beta chains form an alternating ring which encloses part of the gamma chain. CF(1) is attached to CF(0) by a central stalk formed by the gamma and epsilon chains, while a peripheral stalk is formed by the delta and b chains.

Its subcellular location is the cell inner membrane. The enzyme catalyses ATP + H2O + 4 H(+)(in) = ADP + phosphate + 5 H(+)(out). Functionally, produces ATP from ADP in the presence of a proton gradient across the membrane. The alpha chain is a regulatory subunit. The sequence is that of ATP synthase subunit alpha from Pectobacterium carotovorum subsp. carotovorum (strain PC1).